The chain runs to 290 residues: Agroclavine dehydrogenase (290 aa).

Belongs to the fgaFS/easG family. As to quaternary structure, monomer.

The enzyme catalyses agroclavine + NADP(+) = didehydroagroclavine + NADPH + H(+). The protein operates within alkaloid biosynthesis; ergot alkaloid biosynthesis. In terms of biological role, agroclavine dehydrogenase; part of the gene cluster that mediates the biosynthesis of fungal ergot alkaloid. DmaW catalyzes the first step of ergot alkaloid biosynthesis by condensing dimethylallyl diphosphate (DMAP) and tryptophan to form 4-dimethylallyl-L-tryptophan. The second step is catalyzed by the methyltransferase easF that methylates 4-dimethylallyl-L-tryptophan in the presence of S-adenosyl-L-methionine, resulting in the formation of 4-dimethylallyl-L-abrine. The catalase easC and the FAD-dependent oxidoreductase easE then transform 4-dimethylallyl-L-abrine to chanoclavine-I which is further oxidized by easD in the presence of NAD(+), resulting in the formation of chanoclavine-I aldehyde. Agroclavine dehydrogenase easG then mediates the conversion of chanoclavine-I aldehyde to agroclavine via a non-enzymatic adduct reaction: the substrate is an iminium intermediate that is formed spontaneously from chanoclavine-I aldehyde in the presence of glutathione. The presence of easA is not required to complete this reaction. Further conversion of agroclavine to paspalic acid is a two-step process involving oxidation of agroclavine to elymoclavine and of elymoclavine to paspalic acid, the second step being performed by the elymoclavine oxidase cloA. Paspalic acid is then further converted to D-lysergic acid. Ergopeptines are assembled from D-lysergic acid and three different amino acids by the D-lysergyl-peptide-synthetases composed each of a monomudular and a trimodular nonribosomal peptide synthetase subunit. LpsB and lpsC encode the monomodular subunits responsible for D-lysergic acid activation and incorporation into the ergopeptine backbone. LpsA1 and A2 subunits encode the trimodular nonribosomal peptide synthetase assembling the tripeptide portion of ergopeptines. LpsA1 is responsible for formation of the major ergopeptine, ergotamine, and lpsA2 for alpha-ergocryptine, the minor ergopeptine of the total alkaloid mixture elaborated by C.purpurea. D-lysergyl-tripeptides are assembled by the nonribosomal peptide synthetases and released as N-(D-lysergyl-aminoacyl)-lactams. Cyclolization of the D-lysergyl-tripeptides is performed by the Fe(2+)/2-ketoglutarate-dependent dioxygenase easH which introduces a hydroxyl group into N-(D-lysergyl-aminoacyl)-lactam at alpha-C of the aminoacyl residue followed by spontaneous condensation with the terminal lactam carbonyl group. This Claviceps purpurea (Ergot fungus) protein is Agroclavine dehydrogenase.